A 464-amino-acid chain; its full sequence is L-cystine uptake protein TcyP (464 aa).

The next 10 membrane-spanning stretches (helical) occupy residues 3–23, 34–54, 73–93, 107–127, 184–204, 225–245, 263–283, 347–367, 371–391, and 395–415; these read TLLV…LYYM, VFTA…IYEP, YVKL…ISAF, GLII…GIAA, PTST…FIGV, IVMR…LALM, FVLA…LLIA, AGIY…IDPL, FILT…GVGG, and FAAL…ALVI.

Belongs to the dicarboxylate/amino acid:cation symporter (DAACS) (TC 2.A.23) family.

The protein resides in the membrane. Its function is as follows. Mediates uptake of L-cystine, the oxidized form of L-cysteine. The chain is L-cystine uptake protein TcyP from Bacillus thuringiensis subsp. konkukian (strain 97-27).